The chain runs to 366 residues: Galactoside alpha-(1,2)-fucosyltransferase 1 (366 aa).

The Cytoplasmic portion of the chain corresponds to 1 to 8 (MWPPSHRQ). Residues 9–25 (LCRAFLLVCVFSVISFF) traverse the membrane as a helical; Signal-anchor for type II membrane protein segment. Residues 26–366 (LHIHQDSFPH…LSPLWTLAKP (341 aa)) are Lumenal-facing. 3 N-linked (GlcNAc...) asparagine glycosylation sites follow: Asn66, Asn302, and Asn328.

Belongs to the glycosyltransferase 11 family.

The protein localises to the golgi apparatus. It is found in the golgi stack membrane. The catalysed reaction is a beta-D-galactosyl-(1-&gt;4)-N-acetyl-beta-D-glucosaminyl derivative + GDP-beta-L-fucose = an alpha-L-Fuc-(1-&gt;2)-beta-D-Gal-(1-&gt;4)-beta-D-GlcNAc derivative + GDP + H(+). It catalyses the reaction a ganglioside GA1 + GDP-beta-L-fucose = a ganglioside Fuc-GA1 + GDP + H(+). The enzyme catalyses a beta-D-Gal-(1-&gt;3)-beta-D-GlcNAc-(1-&gt;3)-beta-D-Gal-(1-&gt;4)-beta-D-Glc-(1&lt;-&gt;1')-Cer(d18:1(4E)) + GDP-beta-L-fucose = alpha-L-fucosyl-(1-&gt;2)- beta-D-galactosyl-(1-&gt;3)-N-acetyl-beta-D-glucosaminyl-(1-&gt;3)-beta-D-galactosyl-(1-&gt;4)-beta-D-glucosyl-(1&lt;-&gt;1')-N-acylsphing-4-enine + GDP + H(+). It carries out the reaction a neolactoside nLc4Cer(d18:1(4E)) + GDP-beta-L-fucose = a neolactoside IV(2)-alpha-Fuc-nLc4Cer(d18:1(4E)) + GDP + H(+). The catalysed reaction is a ganglioside GM1 + GDP-beta-L-fucose = a ganglioside Fuc-GM1 + GDP + H(+). It catalyses the reaction beta-D-galactosyl-(1-&gt;3)-N-acetyl-D-galactosamine + GDP-beta-L-fucose = alpha-L-fucosyl-(1-&gt;2)-beta-D-galactosyl-(1-&gt;3)-N-acetyl-D-galactosamine + GDP + H(+). Its pathway is protein modification; protein glycosylation. In terms of biological role, catalyzes the transfer of L-fucose, from a guanosine diphosphate-beta-L-fucose, to the terminal galactose residue of glycoconjugates through an alpha(1,2) linkage leading to H antigen synthesis that is an intermediate substrate in the synthesis of ABO blood group antigens. H antigen is essential for maturation of the glomerular layer of the main olfactory bulb, in cell migration and early cell-cell contacts during tumor associated angiogenesis. Preferentially fucosylates soluble lactose and to a lesser extent fucosylates glycolipids gangliosides GA1 and GM1a. This is Galactoside alpha-(1,2)-fucosyltransferase 1 from Gorilla gorilla gorilla (Western lowland gorilla).